A 379-amino-acid polypeptide reads, in one-letter code: UDP-4-amino-4-deoxy-L-arabinose--oxoglutarate aminotransferase (379 aa).

An N6-(pyridoxal phosphate)lysine modification is found at K182.

Belongs to the DegT/DnrJ/EryC1 family. ArnB subfamily. As to quaternary structure, homodimer. Pyridoxal 5'-phosphate is required as a cofactor.

The catalysed reaction is UDP-4-amino-4-deoxy-beta-L-arabinose + 2-oxoglutarate = UDP-beta-L-threo-pentopyranos-4-ulose + L-glutamate. Its pathway is nucleotide-sugar biosynthesis; UDP-4-deoxy-4-formamido-beta-L-arabinose biosynthesis; UDP-4-deoxy-4-formamido-beta-L-arabinose from UDP-alpha-D-glucuronate: step 2/3. It functions in the pathway bacterial outer membrane biogenesis; lipopolysaccharide biosynthesis. Functionally, catalyzes the conversion of UDP-4-keto-arabinose (UDP-Ara4O) to UDP-4-amino-4-deoxy-L-arabinose (UDP-L-Ara4N). The modified arabinose is attached to lipid A and is required for resistance to polymyxin and cationic antimicrobial peptides. The polypeptide is UDP-4-amino-4-deoxy-L-arabinose--oxoglutarate aminotransferase (Escherichia coli (strain ATCC 8739 / DSM 1576 / NBRC 3972 / NCIMB 8545 / WDCM 00012 / Crooks)).